The sequence spans 131 residues: MSMSDPIADMLTRIRNAQMVEKKEVNVPASNLKSAIASVMQEEGYIKSFSVDGIAASKTLNIKLKYYDNKSVIEKLKRISKPSLRVYVSSSQMPSVMNGLGIVIVSTPKGVMTGQTAYEQNIGGEVLCSVY.

This sequence belongs to the universal ribosomal protein uS8 family. As to quaternary structure, part of the 30S ribosomal subunit. Contacts proteins S5 and S12.

In terms of biological role, one of the primary rRNA binding proteins, it binds directly to 16S rRNA central domain where it helps coordinate assembly of the platform of the 30S subunit. In Ruthia magnifica subsp. Calyptogena magnifica, this protein is Small ribosomal subunit protein uS8.